A 395-amino-acid polypeptide reads, in one-letter code: Phosphopentomutase (395 aa).

6 residues coordinate Mn(2+): D14, D286, H291, D327, H328, and H339.

It belongs to the phosphopentomutase family. Mn(2+) serves as cofactor.

The protein localises to the cytoplasm. The catalysed reaction is 2-deoxy-alpha-D-ribose 1-phosphate = 2-deoxy-D-ribose 5-phosphate. It carries out the reaction alpha-D-ribose 1-phosphate = D-ribose 5-phosphate. It functions in the pathway carbohydrate degradation; 2-deoxy-D-ribose 1-phosphate degradation; D-glyceraldehyde 3-phosphate and acetaldehyde from 2-deoxy-alpha-D-ribose 1-phosphate: step 1/2. Its function is as follows. Isomerase that catalyzes the conversion of deoxy-ribose 1-phosphate (dRib-1-P) and ribose 1-phosphate (Rib-1-P) to deoxy-ribose 5-phosphate (dRib-5-P) and ribose 5-phosphate (Rib-5-P), respectively. The polypeptide is Phosphopentomutase (Staphylococcus saprophyticus subsp. saprophyticus (strain ATCC 15305 / DSM 20229 / NCIMB 8711 / NCTC 7292 / S-41)).